The following is a 92-amino-acid chain: Large ribosomal subunit protein eL43 (92 aa).

The segment at Cys39–Cys60 adopts a C4-type zinc-finger fold.

This sequence belongs to the eukaryotic ribosomal protein eL43 family.

The protein is Large ribosomal subunit protein eL43 (RPL37A) of Cryptochiton stelleri (Giant gumboot chiton).